The sequence spans 364 residues: Heme A synthase (364 aa).

A run of 8 helical transmembrane segments spans residues 25 to 45 (ALRLWLGLVILALFALVLVGG), 111 to 131 (FLARSIGVIFALPLVFFWATG), 139 to 159 (WPLVGILALGGFQGFIGWWMV), 174 to 194 (LATHLVTACLIFSACVWVMRG), 212 to 232 (AIALLCLVLFQIYLGALVAGL), 270 to 290 (VQFVHRIGAYTVLLVALYHMV), 305 to 325 (SVVLFAIVCCQAVLGISALLL), and 327 to 347 (VPLDAALAHQGGALILLGFTV). A heme-binding site is contributed by His-274. Position 335 (His-335) interacts with heme.

It belongs to the COX15/CtaA family. Type 2 subfamily. As to quaternary structure, interacts with CtaB. It depends on heme b as a cofactor.

It localises to the cell membrane. The enzyme catalyses Fe(II)-heme o + 2 A + H2O = Fe(II)-heme a + 2 AH2. Its pathway is porphyrin-containing compound metabolism; heme A biosynthesis; heme A from heme O: step 1/1. In terms of biological role, catalyzes the conversion of heme O to heme A by two successive hydroxylations of the methyl group at C8. The first hydroxylation forms heme I, the second hydroxylation results in an unstable dihydroxymethyl group, which spontaneously dehydrates, resulting in the formyl group of heme A. This Allorhizobium ampelinum (strain ATCC BAA-846 / DSM 112012 / S4) (Agrobacterium vitis (strain S4)) protein is Heme A synthase.